Reading from the N-terminus, the 307-residue chain is Serine/threonine-protein phosphatase 4 catalytic subunit B (307 aa).

Mn(2+)-binding residues include Asp-54, His-56, Asp-82, and Asn-114. His-115 acts as the Proton donor in catalysis. Mn(2+) contacts are provided by His-164 and His-238. Leu-307 carries the leucine methyl ester modification.

The protein belongs to the PPP phosphatase family. PP-4 (PP-X) subfamily. As to quaternary structure, serine/threonine-protein phosphatase 4 (PP4) occurs in different assemblies of the catalytic and one or more regulatory subunits. Mn(2+) serves as cofactor.

The protein resides in the cytoplasm. The protein localises to the cytoskeleton. It localises to the microtubule organizing center. Its subcellular location is the centrosome. It catalyses the reaction O-phospho-L-seryl-[protein] + H2O = L-seryl-[protein] + phosphate. It carries out the reaction O-phospho-L-threonyl-[protein] + H2O = L-threonyl-[protein] + phosphate. Protein phosphatase that regulates many processes such as microtubule organization at centrosomes. The protein is Serine/threonine-protein phosphatase 4 catalytic subunit B (ppp4cb) of Danio rerio (Zebrafish).